We begin with the raw amino-acid sequence, 567 residues long: Adenine deaminase 2 (567 aa).

It belongs to the metallo-dependent hydrolases superfamily. Adenine deaminase family. The cofactor is Mn(2+).

It catalyses the reaction adenine + H2O + H(+) = hypoxanthine + NH4(+). The polypeptide is Adenine deaminase 2 (Oenococcus oeni (strain ATCC BAA-331 / PSU-1)).